The chain runs to 777 residues: Subtilisin-like protease SBT1.4 (777 aa).

The N-terminal stretch at 1–25 is a signal peptide; it reads MAKLSLSSIFFVFPLLLCFFSPSSS. Residues 26 to 110 constitute a propeptide, activation peptide; that stretch reads SSDGLESYIV…VIPDQAREIH (85 aa). Residues 32 to 110 form the Inhibitor I9 domain; that stretch reads SYIVHVQRSH…VIPDQAREIH (79 aa). One can recognise a Peptidase S8 domain in the interval 115–614; the sequence is PAFLGFSQNS…AGHVDPNKAL (500 aa). The Charge relay system role is filled by Asp-142. N-linked (GlcNAc...) asparagine glycosylation is present at Asn-198. The interval 199–223 is disordered; sequence GTKKHAAKESRSPRDTEGHGTHTAS. Over residues 205–218 the composition is skewed to basic and acidic residues; that stretch reads AKESRSPRDTEGHG. His-217 functions as the Charge relay system in the catalytic mechanism. Asn-232 and Asn-395 each carry an N-linked (GlcNAc...) asparagine glycan. Residues 376-461 enclose the PA domain; sequence LSLVYSGDCG…VGAKAGDQIR (86 aa). The active-site Charge relay system is Ser-546.

This sequence belongs to the peptidase S8 family.

Its subcellular location is the secreted. This chain is Subtilisin-like protease SBT1.4, found in Arabidopsis thaliana (Mouse-ear cress).